The chain runs to 203 residues: MSPKRRTQAERAMETQGKLIAAALGVLREKGYAGFRIADVPGAAGVSRGAQSHHFPTKLELLLATFEWLYEQITERSRARLAKLKPEDDVIQQMLDDAAEFFLDDDFSISLDLIVAADRDPALREGIQRTVERNRFVVEDMWLGVLVSRGLSRDDAEDILWLIFNSVRGLAVRSLWQKDKERFERVRNSTLEIARERYAKFKR.

The 61-residue stretch at 13-73 folds into the HTH tetR-type domain; that stretch reads METQGKLIAA…ATFEWLYEQI (61 aa). A DNA-binding region (H-T-H motif) is located at residues 36 to 55; the sequence is RIADVPGAAGVSRGAQSHHF.

Its function is as follows. Involved in the repression of the cym and cmt operons which are responsible of the p-cymene degradation. This Pseudomonas putida (Arthrobacter siderocapsulatus) protein is HTH-type transcriptional regulator CymR.